The chain runs to 113 residues: Large ribosomal subunit protein P1z (113 aa).

The tract at residues 87 to 113 is disordered; sequence AAAPAKEEKKDEPAEESDGDLGFGLFD. Phosphoserine is present on Ser-103.

Belongs to the eukaryotic ribosomal protein P1/P2 family. P1 and P2 exist as dimers at the large ribosomal subunit.

In terms of biological role, plays an important role in the elongation step of protein synthesis. This is Large ribosomal subunit protein P1z (RPP1B) from Arabidopsis thaliana (Mouse-ear cress).